A 294-amino-acid polypeptide reads, in one-letter code: Aquaporin NIP1-2 (294 aa).

Position 1 is an N-acetylmethionine (Met1). The next 2 helical transmembrane spans lie at 54–74 (LMAE…AVAV) and 82–102 (VTLP…VYSL). The short motif at 111–113 (NPA) is the NPA 1 element. 3 consecutive transmembrane segments (helical) span residues 133–153 (VISQ…LFGL), 177–197 (SFVI…GVAT), and 201–221 (AIGE…VIIA). Residues 230–232 (NPG) carry the NPA 2 motif. The chain crosses the membrane as a helical span at residues 248-268 (WIYIVSPIVGAVSGAWVYNMV). Ser283 is modified (phosphoserine).

Belongs to the MIP/aquaporin (TC 1.A.8) family. NIP (TC 1.A.8.12) subfamily. As to expression, expressed in developing seeds.

Its subcellular location is the membrane. Functionally, water channel probably required to promote glycerol permeability and water transport across cell membranes. This is Aquaporin NIP1-2 (NIP1-2) from Arabidopsis thaliana (Mouse-ear cress).